A 387-amino-acid polypeptide reads, in one-letter code: Cyclin-J-like protein (387 aa).

Positions 13–142 constitute a Cyclin N-terminal domain; it reads DVHCTLREKE…LLEAFSWDLC (130 aa).

It belongs to the cyclin family. Cyclin J subfamily.

This is Cyclin-J-like protein (Ccnjl) from Mus musculus (Mouse).